Here is a 237-residue protein sequence, read N- to C-terminus: NAD(P)H-hydrate epimerase (237 aa).

In terms of domain architecture, YjeF N-terminal spans 11–223; the sequence is AASLDRDLMN…GLDIPEYPGV (213 aa). 61-65 is a (6S)-NADPHX binding site; it reads NNGGD. K(+)-binding residues include Asn62 and Asp123. Residues 127–133 and Asp156 contribute to the (6S)-NADPHX site; that span reads GFSFSGP. Residue Ser159 coordinates K(+).

It belongs to the NnrE/AIBP family. The cofactor is K(+).

The protein localises to the cytoplasm. The protein resides in the mitochondrion. It catalyses the reaction (6R)-NADHX = (6S)-NADHX. It carries out the reaction (6R)-NADPHX = (6S)-NADPHX. Functionally, catalyzes the epimerization of the S- and R-forms of NAD(P)HX, a damaged form of NAD(P)H that is a result of enzymatic or heat-dependent hydration. This is a prerequisite for the S-specific NAD(P)H-hydrate dehydratase to allow the repair of both epimers of NAD(P)HX. The protein is NAD(P)H-hydrate epimerase of Ajellomyces capsulatus (strain G186AR / H82 / ATCC MYA-2454 / RMSCC 2432) (Darling's disease fungus).